The chain runs to 140 residues: Profilin-1 (140 aa).

An N-acetylalanine modification is found at A2. At S28 the chain carries Phosphoserine. A Glycyl lysine isopeptide (Lys-Gly) (interchain with G-Cter in SUMO2); alternate cross-link involves residue K54. K54 participates in a covalent cross-link: Glycyl lysine isopeptide (Lys-Gly) (interchain with G-Cter in ubiquitin); alternate. S57 carries the post-translational modification Phosphoserine. An N6-acetyllysine modification is found at K108. Y129 carries the post-translational modification Phosphotyrosine. Phosphoserine; by ROCK1 is present on S138.

This sequence belongs to the profilin family. Found in a complex with XPO6, Ran, ACTB and PFN1. Interacts with ACTB. Interacts with VASP. Interacts with HTT. Interacts with SH3BGRL. Occurs in many kinds of cells as a complex with monomeric actin in a 1:1 ratio. Interacts with ACTMAP. Phosphorylation at Ser-138 reduces its affinity for G-actin and blocks its interaction with HTT, reducing its ability to inhibit androgen receptor (AR) and HTT aggregation.

Its subcellular location is the cytoplasm. The protein resides in the cytoskeleton. Binds to actin and affects the structure of the cytoskeleton. At high concentrations, profilin prevents the polymerization of actin, whereas it enhances it at low concentrations. By binding to PIP2, it inhibits the formation of IP3 and DG. Inhibits androgen receptor (AR) and HTT aggregation and binding of G-actin is essential for its inhibition of AR. The protein is Profilin-1 (Pfn1) of Mus musculus (Mouse).